We begin with the raw amino-acid sequence, 357 residues long: Glucose-6-phosphatase catalytic subunit 1 (357 aa).

Over 1–28 the chain is Lumenal; the sequence is MEKGMDVLHDFGIQSTHYLQVNYQDSQD. The helical transmembrane segment at 29 to 49 threads the bilayer; the sequence is WFILVSVIADLRNAFYVLFPI. The Cytoplasmic segment spans residues 50–60; that stretch reads WFHLREAVGIK. A helical transmembrane segment spans residues 61-81; sequence LLWVAVIGDWLNLVFKWILFG. Over 82 to 117 the chain is Lumenal; the sequence is QRPYWWVMDTDYYSNTSVPLIKQFPVTCETGPGSPS. Arg83 lines the substrate pocket. An N-linked (GlcNAc...) asparagine glycan is attached at Asn96. Residues 118-138 form a helical membrane-spanning segment; sequence GHAMGTAGVYYVMVTSTLSIF. The active-site Proton donor is His119. Topologically, residues 139-147 are cytoplasmic; the sequence is RGRKRPTYR. Residues 148-168 form a helical membrane-spanning segment; that stretch reads FRCLNILLWLGFWAVQLNVCL. Over 169–170 the chain is Lumenal; sequence SR. Arg170 provides a ligand contact to substrate. A helical transmembrane segment spans residues 171-191; it reads IYLAAHFPHQVVAGVLSGIAV. His176 acts as the Nucleophile in catalysis. Residues 192–209 are Cytoplasmic-facing; that stretch reads AETFRHIQSIYNASLKKY. Residues 210–230 traverse the membrane as a helical segment; sequence FLITFFLFSFAIGFYLLLKGL. Residues 231–254 are Lumenal-facing; sequence GVDLLWTLEKARRWCERPEWVHID. The helical transmembrane segment at 255–275 threads the bilayer; sequence TTPFASLLKNVGTLFGLGVTL. Residues 276 to 291 lie on the Cytoplasmic side of the membrane; the sequence is NSSMYRESCKGKLSKW. Residues 292–312 traverse the membrane as a helical segment; sequence FPFRLSCIVVSLILLHLFDSL. The Lumenal portion of the chain corresponds to 313 to 320; the sequence is KPPSQTEL. The helical transmembrane segment at 321-341 threads the bilayer; that stretch reads IFYTLSFCKSAAVPLASVSLI. At 342–357 the chain is on the cytoplasmic side; the sequence is PYCLARVFDQPDKKSL. The Prevents secretion from ER motif lies at 354–357; the sequence is KKSL.

It belongs to the glucose-6-phosphatase family.

It is found in the endoplasmic reticulum membrane. It carries out the reaction D-glucose 6-phosphate + H2O = D-glucose + phosphate. It functions in the pathway carbohydrate biosynthesis; gluconeogenesis. Hydrolyzes glucose-6-phosphate to glucose in the endoplasmic reticulum. Forms with the glucose-6-phosphate transporter (SLC37A4/G6PT) the complex responsible for glucose production in the terminal step of glycogenolysis and gluconeogenesis. Hence, it is the key enzyme in homeostatic regulation of blood glucose levels. The polypeptide is Glucose-6-phosphatase catalytic subunit 1 (G6PC1) (Canis lupus familiaris (Dog)).